The following is a 1684-amino-acid chain: A-kinase anchor protein 12 (1684 aa).

The segment at 1-124 is disordered; it reads MGAGSSTEQR…DITKDEQEET (124 aa). Gly-2 is lipidated: N-myristoyl glycine. A phosphoserine mark is found at Ser-11, Ser-18, Ser-22, and Ser-27. Positions 30-48 are enriched in low complexity; it reads GPAAEASGAAGDPADADPA. Acidic residues predominate over residues 75–86; sequence ESQDGQEEEVTV. The segment covering 89–105 has biased composition (basic and acidic residues); that stretch reads VGQRESEDVKEKDRAKE. Phosphoserine is present on Ser-136. Disordered regions lie at residues 175-281 and 296-353; these read SDTV…ETTS and KKTS…SADY. Positions 212–227 are enriched in basic and acidic residues; sequence ASKESELKQSTEKQEG. Polar residues predominate over residues 228–247; the sequence is TLKQAQSSTEIPLQAESGQG. Ser-234 and Ser-244 each carry phosphoserine. Residues 251–266 show a composition bias toward basic and acidic residues; that stretch reads EAAKDGEENREKEPTK. Residues 253 to 543 are involved in PKC-binding; it reads AKDGEENREK…QHIQTESPES (291 aa). 2 positions are modified to phosphoserine: Ser-270 and Ser-273. Positions 270-281 are enriched in polar residues; it reads SPTSPVSNETTS. Residues 302-320 show a composition bias toward basic and acidic residues; sequence KPKEDDLETSEKRKEQEAE. Over residues 321–342 the composition is skewed to acidic residues; sequence KVDEEEGEKTEPAPAEEQEPAE. Thr-330 carries the post-translational modification Phosphothreonine. Ser-350 carries the post-translational modification Phosphoserine. Phosphotyrosine is present on Tyr-353. Ser-371 and Ser-467 each carry phosphoserine. Residues 421–479 are disordered; sequence GSGESLPPEKLAETQEVPQEAEPVEELMKTKEVCVSGGDHTQLTDLSPEEKMLPKHPEG. Residues 468 to 478 show a composition bias toward basic and acidic residues; that stretch reads PEEKMLPKHPE. A phosphoserine mark is found at Ser-489, Ser-505, and Ser-507. The segment at 492-825 is disordered; the sequence is RIKVQGSPLK…INEDDPDVPA (334 aa). The segment covering 497-511 has biased composition (low complexity); that stretch reads GSPLKKLFSSSGLKK. Residues 512-521 are compositionally biased toward basic residues; the sequence is LSGKKQKGKR. Phosphoserine is present on residues Ser-540, Ser-543, Ser-584, Ser-598, Ser-613, and Ser-615. Residues 593–613 carry the AKAP CaM-binding 1 motif; it reads ITPWASFKKMVTPKKRVRRPS. Residues 611-625 are compositionally biased toward basic and acidic residues; sequence RPSESDKEEELDKVK. Residues 626-637 are compositionally biased toward low complexity; sequence SATLSSTESTAS. Thr-628 carries the post-translational modification Phosphothreonine. Residues Ser-630, Ser-631, Ser-634, and Ser-637 each carry the phosphoserine modification. Positions 641-660 are enriched in basic and acidic residues; sequence DEVRAVGEEQRSEEPKRRVD. A phosphoserine mark is found at Ser-682, Ser-683, and Ser-684. Positions 696–710 are enriched in basic and acidic residues; the sequence is DGHRAEEASKDKEAD. Polar residues predominate over residues 714–723; sequence ASTQEQDQAH. A compositionally biased stretch (low complexity) spans 724–741; that stretch reads GSSSPEPAGSPSEGEGVS. Residues Ser-733, Ser-745, Ser-767, and Ser-786 each carry the phosphoserine modification. Positions 740–760 match the AKAP CaM-binding 2 motif; the sequence is VSTWESFKRLVTPRKKSKSKL. Positions 781–801 match the AKAP CaM-binding 3 motif; it reads EESWVSIKKFIPGRRKKRADG. A Phosphothreonine modification is found at Thr-871. Position 873 is a phosphoserine (Ser-873). Positions 970 to 1001 are disordered; that stretch reads TEASGAEETTDMVSAVSQLSDSPDTTEEATPV. Over residues 980-992 the composition is skewed to polar residues; sequence DMVSAVSQLSDSP. A Glycyl lysine isopeptide (Lys-Gly) (interchain with G-Cter in SUMO1) cross-link involves residue Lys-1030. 4 disordered regions span residues 1055–1106, 1121–1211, 1232–1365, and 1391–1492; these read VEED…VTED, LMEQ…DVLE, EGEA…DKAD, and TVAT…REKI. Ser-1059 carries the post-translational modification Phosphoserine. Polar residues predominate over residues 1130 to 1176; the sequence is SSETLTDSETNGSTPLADSDTPNGTQQDETVDSQDSNAIAAVKQSQV. Basic and acidic residues-rich tracts occupy residues 1198-1210 and 1239-1254; these read QEEHREKPGRDVL and DGEKVKDGQCVKELEV. At Ser-1292 the chain carries Phosphoserine. The span at 1293–1331 shows a compositional bias: basic and acidic residues; the sequence is PEKREMGTDVEKEETETKTEQASEEHEQETAAPEHEGTH. Phosphoserine is present on residues Ser-1351, Ser-1355, and Ser-1357. The segment covering 1467–1492 has biased composition (basic and acidic residues); it reads QRSDEDNKPDAGPDAAGKESAAREKI. Positions 1501–1514 are RII-binding; sequence ELESKSNKIVQSVI. 2 positions are modified to phosphoserine: Ser-1546 and Ser-1645. The segment at 1568 to 1684 is disordered; it reads TLSAVAQEGL…QEPKGDLTES (117 aa). The span at 1653–1684 shows a compositional bias: basic and acidic residues; it reads LTEEGDALKEEMNKAQTEEDDLQEPKGDLTES.

In terms of assembly, binds to dimeric RII-alpha regulatory subunit of PKC. As to expression, isoform 1 is predominantly found in the nervous system. Isoform 3 is testis specific.

It is found in the cytoplasm. It localises to the cytoskeleton. Its subcellular location is the membrane. Functionally, anchoring protein that mediates the subcellular compartmentation of protein kinase A (PKA) and protein kinase C (PKC). This Mus musculus (Mouse) protein is A-kinase anchor protein 12 (Akap12).